We begin with the raw amino-acid sequence, 126 residues long: Holo-[acyl-carrier-protein] synthase (126 aa).

Mg(2+) is bound by residues aspartate 9 and glutamate 58.

This sequence belongs to the P-Pant transferase superfamily. AcpS family. Mg(2+) is required as a cofactor.

It localises to the cytoplasm. The enzyme catalyses apo-[ACP] + CoA = holo-[ACP] + adenosine 3',5'-bisphosphate + H(+). Transfers the 4'-phosphopantetheine moiety from coenzyme A to a Ser of acyl-carrier-protein. The chain is Holo-[acyl-carrier-protein] synthase from Aliivibrio fischeri (strain MJ11) (Vibrio fischeri).